Here is a 389-residue protein sequence, read N- to C-terminus: Alpha-2B adrenergic receptor (389 aa).

The helical transmembrane segment at 1-25 threads the bilayer; that stretch reads AIAAVITFLILFTIFGNALVILAVL. Residues 26–36 lie on the Cytoplasmic side of the membrane; it reads TSRSLRAPQNL. The chain crosses the membrane as a helical span at residues 37–62; it reads FLVSLAAADILVATLIIPFSLANELL. Residues 63 to 72 lie on the Extracellular side of the membrane; the sequence is GYWYFWRTWC. A disulfide bridge links cysteine 72 with cysteine 151. The helical transmembrane segment at 73–95 threads the bilayer; that stretch reads EVYLALDVLFCTSSIVHLCAISL. Over 96-117 the chain is Cytoplasmic; it reads DRYWAVSRALEYNSKRTPRRIK. Residues 118 to 140 form a helical membrane-spanning segment; sequence CIILTVWLIAAAISLPPLIYKGD. Topologically, residues 141–156 are extracellular; the sequence is QGPQPRGRPQCMLNQE. Residues 157-180 traverse the membrane as a helical segment; sequence AWYILSSSIGSFFAPCLIMILVYL. The Cytoplasmic portion of the chain corresponds to 181–353; sequence RIYLIAKRSN…LTREKRFTFV (173 aa). Disordered regions lie at residues 192 to 218 and 231 to 310; these read RGPRAKGAPGEGESKQPHPLTAGPLAL and DGEA…HLQQ. A compositionally biased stretch (basic and acidic residues) spans 234 to 249; the sequence is ANGHSKLTGEKERETS. Residues 354–377 form a helical membrane-spanning segment; the sequence is LTVVIGVFVLCWFPFFFSYSLGAI. Over 378-386 the chain is Extracellular; the sequence is CPQHCKVPH. The chain crosses the membrane as a helical span at residues 387–389; it reads GLF.

The protein belongs to the G-protein coupled receptor 1 family. Adrenergic receptor subfamily. ADRA2B sub-subfamily. As to quaternary structure, interacts with RAB26. Interacts with PPP1R9B.

The protein resides in the cell membrane. Functionally, alpha-2 adrenergic receptors mediate the catecholamine-induced inhibition of adenylate cyclase through the action of G proteins. The protein is Alpha-2B adrenergic receptor (ADRA2B) of Procavia capensis habessinica (Abyssinian hyrax).